Reading from the N-terminus, the 650-residue chain is DNA ligase (650 aa).

NAD(+) is bound by residues 30–34 (DEEYD), 79–80 (SL), and Asp108. Lys110 acts as the N6-AMP-lysine intermediate in catalysis. Positions 131, 165, and 304 each coordinate NAD(+). Positions 398, 401, 414, and 419 each coordinate Zn(2+). Positions 573–650 (PQDSPIAGKS…EEELGEILES (78 aa)) constitute a BRCT domain.

It belongs to the NAD-dependent DNA ligase family. LigA subfamily. Mg(2+) is required as a cofactor. The cofactor is Mn(2+).

It carries out the reaction NAD(+) + (deoxyribonucleotide)n-3'-hydroxyl + 5'-phospho-(deoxyribonucleotide)m = (deoxyribonucleotide)n+m + AMP + beta-nicotinamide D-nucleotide.. In terms of biological role, DNA ligase that catalyzes the formation of phosphodiester linkages between 5'-phosphoryl and 3'-hydroxyl groups in double-stranded DNA using NAD as a coenzyme and as the energy source for the reaction. It is essential for DNA replication and repair of damaged DNA. The protein is DNA ligase of Wolinella succinogenes (strain ATCC 29543 / DSM 1740 / CCUG 13145 / JCM 31913 / LMG 7466 / NCTC 11488 / FDC 602W) (Vibrio succinogenes).